The primary structure comprises 504 residues: Trifunctional (S)-stylopine synthase/(S)-nandinine synthase/(S)-canadine synthase (504 aa).

The helical transmembrane segment at 16–36 (SSTTTTTTILLSLLFTIFIIL) threads the bilayer. Cys-448 lines the heme pocket.

Belongs to the cytochrome P450 family. It depends on heme as a cofactor. Expressed in roots and at lower levels in stems, leaves and plantlets.

The protein localises to the endoplasmic reticulum membrane. It catalyses the reaction (S)-cheilanthifoline + reduced [NADPH--hemoprotein reductase] + O2 = (S)-stylopine + oxidized [NADPH--hemoprotein reductase] + 2 H2O + H(+). The catalysed reaction is (S)-tetrahydrocolumbamine + reduced [NADPH--hemoprotein reductase] + O2 = (S)-canadine + oxidized [NADPH--hemoprotein reductase] + 2 H2O + H(+). The enzyme catalyses (S)-scoulerine + reduced [NADPH--hemoprotein reductase] + O2 = (S)-nandinine + oxidized [NADPH--hemoprotein reductase] + 2 H2O + H(+). In terms of biological role, methylenedioxy bridge-forming cytochrome P450 involved in the biosynthesis of isoquinoline alkaloids. Converts (S)-cheilanthifoline to (S)-stylopine, (S)-scoulerine to (S)-nandinine and (S)-tetrahydrocolumbamine to (S)-canadine. Can be involved in both sanguinarine and berberine biosynthesis. Catalyzes an oxidative reaction that does not incorporate oxygen into the product. The chain is Trifunctional (S)-stylopine synthase/(S)-nandinine synthase/(S)-canadine synthase from Argemone mexicana (Mexican prickly poppy).